Reading from the N-terminus, the 205-residue chain is Holliday junction branch migration complex subunit RuvA (205 aa).

Residues 1-64 form a domain I region; sequence MIGRLRGVLI…EDAQLLYGFI (64 aa). A domain II region spans residues 65–143; the sequence is TKQERSLFRL…SLMEASVGSE (79 aa). Positions 144 to 156 are flexible linker; sequence REFVLQSNYSPAP. A domain III region spans residues 157–205; sequence TVNSAEEDAISALISLGYKPPQASKAVSAAYKEGMDSETLIKAALKSML.

It belongs to the RuvA family. In terms of assembly, homotetramer. Forms an RuvA(8)-RuvB(12)-Holliday junction (HJ) complex. HJ DNA is sandwiched between 2 RuvA tetramers; dsDNA enters through RuvA and exits via RuvB. An RuvB hexamer assembles on each DNA strand where it exits the tetramer. Each RuvB hexamer is contacted by two RuvA subunits (via domain III) on 2 adjacent RuvB subunits; this complex drives branch migration. In the full resolvosome a probable DNA-RuvA(4)-RuvB(12)-RuvC(2) complex forms which resolves the HJ.

It is found in the cytoplasm. Its function is as follows. The RuvA-RuvB-RuvC complex processes Holliday junction (HJ) DNA during genetic recombination and DNA repair, while the RuvA-RuvB complex plays an important role in the rescue of blocked DNA replication forks via replication fork reversal (RFR). RuvA specifically binds to HJ cruciform DNA, conferring on it an open structure. The RuvB hexamer acts as an ATP-dependent pump, pulling dsDNA into and through the RuvAB complex. HJ branch migration allows RuvC to scan DNA until it finds its consensus sequence, where it cleaves and resolves the cruciform DNA. This is Holliday junction branch migration complex subunit RuvA from Shewanella sp. (strain MR-7).